Here is a 459-residue protein sequence, read N- to C-terminus: Mitochondrial distribution and morphology protein 34 (459 aa).

The region spanning 1 to 190 is the SMP-LTD domain; sequence MSFRFNEAVF…LPSLIFNTSQ (190 aa). Residues 338-347 show a composition bias toward basic and acidic residues; sequence RSNSNDDNAK. The segment at 338–375 is disordered; that stretch reads RSNSNDDNAKPRRRKIKCKKTRTPSNLQSQGEQAVDDS. Residues 348–359 show a composition bias toward basic residues; it reads PRRRKIKCKKTR.

The protein belongs to the MDM34 family. Component of the ER-mitochondria encounter structure (ERMES) or MDM complex, composed of MMM1, MDM10, MDM12 and MDM34. Post-translationally, ubiquitinated by a SCF (SKP1-CUL1-F-box protein) E3 ubiquitin-protein ligase complex containing the F-box protein MDM30. Ubiquitination is important for mitochondrial integrity.

Its subcellular location is the mitochondrion outer membrane. Its function is as follows. Component of the ERMES/MDM complex, which serves as a molecular tether to connect the endoplasmic reticulum (ER) and mitochondria. Components of this complex are involved in the control of mitochondrial shape and protein biogenesis, and function in nonvesicular lipid trafficking between the ER and mitochondria. MDM34 is required for the interaction of the ER-resident membrane protein MMM1 and the outer mitochondrial membrane-resident beta-barrel protein MDM10. This is Mitochondrial distribution and morphology protein 34 from Saccharomyces cerevisiae (strain AWRI1631) (Baker's yeast).